A 493-amino-acid chain; its full sequence is UDP-glucose 6-dehydrogenase (493 aa).

Residues 11-16 (GAGYVG), aspartate 36, arginine 41, and 89-93 (VNTPT) each bind NAD(+). A disordered region spans residues 88–110 (SVNTPTKTYGMGKGRAADLKYIE). An N6-acetyllysine modification is found at lysine 107. Positions 129-135 (KSTVPVR) are allosteric switch region. An NAD(+)-binding site is contributed by 130 to 132 (STV). Glutamate 161 functions as the Proton donor/acceptor in the catalytic mechanism. Residues 161-165 (EFLAE), 220-224 (KLAAN), arginine 260, and 267-273 (KASVGFG) contribute to the substrate site. Glutamate 165 contributes to the NAD(+) binding site. Residue lysine 220 is the Proton donor/acceptor of the active site. Cysteine 276 serves as the catalytic Nucleophile. Residue 276-279 (CFQK) participates in NAD(+) binding. Residues 321 to 325 (SLFNT) form an important for formation of active hexamer structure region. 338 to 339 (FK) lines the substrate pocket. Arginine 346 serves as a coordination point for NAD(+). Position 442 (arginine 442) interacts with substrate. The interval 466–493 (VSSKRIPYTPGEIPKFSLQDPPNKKPKV) is disordered. Residue threonine 474 is modified to Phosphothreonine.

Belongs to the UDP-glucose/GDP-mannose dehydrogenase family. In terms of assembly, homohexamer.

The enzyme catalyses UDP-alpha-D-glucose + 2 NAD(+) + H2O = UDP-alpha-D-glucuronate + 2 NADH + 3 H(+). It functions in the pathway nucleotide-sugar biosynthesis; UDP-alpha-D-glucuronate biosynthesis; UDP-alpha-D-glucuronate from UDP-alpha-D-glucose: step 1/1. UDP-alpha-D-xylose (UDX) acts as a feedback inhibitor. It binds at the same site as the substrate, but functions as allosteric inhibitor by triggering a conformation change that disrupts the active hexameric ring structure and gives rise to an inactive, horseshoe-shaped hexamer. Catalyzes the formation of UDP-alpha-D-glucuronate, a constituent of complex glycosaminoglycans. Required for the biosynthesis of chondroitin sulfate and heparan sulfate. Required for embryonic development via its role in the biosynthesis of glycosaminoglycans. Required for proper brain and neuronal development. The polypeptide is UDP-glucose 6-dehydrogenase (Ugdh) (Mus musculus (Mouse)).